Here is a 413-residue protein sequence, read N- to C-terminus: Protein trichome birefringence-like 9 (413 aa).

The chain crosses the membrane as a helical; Signal-anchor for type II membrane protein span at residues 22-42 (LFVSLFLLSLLIFSTVVVDVM). A GDS motif motif is present at residues 141–143 (GDS). A DCXHWCLPGXXDXWN motif motif is present at residues 384–398 (DCSHWCLPGVPDTWN).

Belongs to the PC-esterase family. TBL subfamily.

The protein localises to the membrane. Functionally, may act as a bridging protein that binds pectin and other cell wall polysaccharides. Probably involved in maintaining esterification of pectins. May be involved in the specific O-acetylation of cell wall polymers. The chain is Protein trichome birefringence-like 9 (TBL9) from Arabidopsis thaliana (Mouse-ear cress).